The sequence spans 283 residues: Elongation factor Ts (283 aa).

The interval 80–83 (TDFV) is involved in Mg(2+) ion dislocation from EF-Tu.

This sequence belongs to the EF-Ts family.

Its subcellular location is the cytoplasm. In terms of biological role, associates with the EF-Tu.GDP complex and induces the exchange of GDP to GTP. It remains bound to the aminoacyl-tRNA.EF-Tu.GTP complex up to the GTP hydrolysis stage on the ribosome. In Serratia proteamaculans (strain 568), this protein is Elongation factor Ts.